The chain runs to 255 residues: Diphthine synthase (255 aa).

S-adenosyl-L-methionine-binding positions include Leu-9, Asp-85, Val-88, 113–114 (SI), Leu-164, Ala-207, and His-232.

Belongs to the diphthine synthase family. Homodimer.

It carries out the reaction 2-[(3S)-amino-3-carboxypropyl]-L-histidyl-[translation elongation factor 2] + 3 S-adenosyl-L-methionine = diphthine-[translation elongation factor 2] + 3 S-adenosyl-L-homocysteine + 3 H(+). Its pathway is protein modification; peptidyl-diphthamide biosynthesis. Functionally, S-adenosyl-L-methionine-dependent methyltransferase that catalyzes the trimethylation of the amino group of the modified target histidine residue in translation elongation factor 2 (EF-2), to form an intermediate called diphthine. The three successive methylation reactions represent the second step of diphthamide biosynthesis. The sequence is that of Diphthine synthase from Methanococcus maripaludis (strain C6 / ATCC BAA-1332).